Here is a 275-residue protein sequence, read N- to C-terminus: Malonyl-[acyl-carrier protein] O-methyltransferase (275 aa).

This sequence belongs to the methyltransferase superfamily.

The enzyme catalyses malonyl-[ACP] + S-adenosyl-L-methionine = malonyl-[ACP] methyl ester + S-adenosyl-L-homocysteine. It functions in the pathway cofactor biosynthesis; biotin biosynthesis. Its function is as follows. Converts the free carboxyl group of a malonyl-thioester to its methyl ester by transfer of a methyl group from S-adenosyl-L-methionine (SAM). It allows to synthesize pimeloyl-ACP via the fatty acid synthetic pathway. This chain is Malonyl-[acyl-carrier protein] O-methyltransferase, found in Methylococcus capsulatus (strain ATCC 33009 / NCIMB 11132 / Bath).